The chain runs to 224 residues: Flagellar L-ring protein (224 aa).

Residues 1–15 form the signal peptide; it reads MARYFILAAALLLTA. A lipid anchor (N-palmitoyl cysteine) is attached at Cys16. A lipid anchor (S-diacylglycerol cysteine) is attached at Cys16.

The protein belongs to the FlgH family. In terms of assembly, the basal body constitutes a major portion of the flagellar organelle and consists of four rings (L,P,S, and M) mounted on a central rod.

It is found in the cell outer membrane. The protein localises to the bacterial flagellum basal body. Its function is as follows. Assembles around the rod to form the L-ring and probably protects the motor/basal body from shearing forces during rotation. This chain is Flagellar L-ring protein, found in Shewanella sp. (strain MR-4).